The primary structure comprises 550 residues: Hydroxylamine reductase (550 aa).

Residues Cys3, Cys6, Cys18, and Cys25 each contribute to the [2Fe-2S] cluster site. 8 residues coordinate hybrid [4Fe-2O-2S] cluster: His249, Glu273, Cys317, Cys405, Cys433, Cys458, Glu492, and Lys494. A Cysteine persulfide modification is found at Cys405.

The protein belongs to the HCP family. Requires [2Fe-2S] cluster as cofactor. The cofactor is hybrid [4Fe-2O-2S] cluster.

The protein localises to the cytoplasm. It catalyses the reaction A + NH4(+) + H2O = hydroxylamine + AH2 + H(+). Catalyzes the reduction of hydroxylamine to form NH(3) and H(2)O. The sequence is that of Hydroxylamine reductase from Escherichia fergusonii (strain ATCC 35469 / DSM 13698 / CCUG 18766 / IAM 14443 / JCM 21226 / LMG 7866 / NBRC 102419 / NCTC 12128 / CDC 0568-73).